We begin with the raw amino-acid sequence, 153 residues long: MGLNDQEWQQVLTMWGKVESDLAGHGHAVLMRLFKSHPETMDRFDKFRGLKTPDEMRGSEDMKKHGVTVLTLGQILKKKGHHEAELKPLSQTHATKHKVPVKYLEFISEAIMKVIAQKHASNFGADAQEAMKKALELFRNDMASKYKEFGFQG.

One can recognise a Globin domain in the interval 2–147 (GLNDQEWQQV…FRNDMASKYK (146 aa)). H65 provides a ligand contact to nitrite. An O2-binding site is contributed by H65. Residue H93 coordinates heme b.

The protein belongs to the globin family. In terms of assembly, monomeric.

It localises to the cytoplasm. The protein resides in the sarcoplasm. The enzyme catalyses Fe(III)-heme b-[protein] + nitric oxide + H2O = Fe(II)-heme b-[protein] + nitrite + 2 H(+). It carries out the reaction H2O2 + AH2 = A + 2 H2O. Monomeric heme protein which primary function is to store oxygen and facilitate its diffusion within muscle tissues. Reversibly binds oxygen through a pentacoordinated heme iron and enables its timely and efficient release as needed during periods of heightened demand. Depending on the oxidative conditions of tissues and cells, and in addition to its ability to bind oxygen, it also has a nitrite reductase activity whereby it regulates the production of bioactive nitric oxide. Under stress conditions, like hypoxia and anoxia, it also protects cells against reactive oxygen species thanks to its pseudoperoxidase activity. This is Myoglobin (MB) from Aptenodytes forsteri (Emperor penguin).